Reading from the N-terminus, the 726-residue chain is 1,4-alpha-glucan branching enzyme GlgB (726 aa).

Asp-407 acts as the Nucleophile in catalysis. Catalysis depends on Glu-460, which acts as the Proton donor.

It belongs to the glycosyl hydrolase 13 family. GlgB subfamily. As to quaternary structure, monomer.

It catalyses the reaction Transfers a segment of a (1-&gt;4)-alpha-D-glucan chain to a primary hydroxy group in a similar glucan chain.. Its pathway is glycan biosynthesis; glycogen biosynthesis. Catalyzes the formation of the alpha-1,6-glucosidic linkages in glycogen by scission of a 1,4-alpha-linked oligosaccharide from growing alpha-1,4-glucan chains and the subsequent attachment of the oligosaccharide to the alpha-1,6 position. The polypeptide is 1,4-alpha-glucan branching enzyme GlgB (Hydrogenovibrio crunogenus (strain DSM 25203 / XCL-2) (Thiomicrospira crunogena)).